A 52-amino-acid polypeptide reads, in one-letter code: Defensin D2 (52 aa).

4 disulfide bridges follow: Cys-8/Cys-52, Cys-19/Cys-39, Cys-25/Cys-46, and Cys-29/Cys-48.

As to expression, distributed in the epidermal cell layer of leaves and in the subepidermal layer region of stems. Not in roots.

It localises to the secreted. Its subcellular location is the cell wall. Functionally, antimicrobial peptide. Active against Fusarium spp., Gram-positive and Gram-negative bacterial pathogens. The chain is Defensin D2 from Spinacia oleracea (Spinach).